The primary structure comprises 251 residues: Imidazole glycerol phosphate synthase subunit HisF (251 aa).

Residues D11 and D130 contribute to the active site.

It belongs to the HisA/HisF family. Heterodimer of HisH and HisF.

The protein resides in the cytoplasm. It carries out the reaction 5-[(5-phospho-1-deoxy-D-ribulos-1-ylimino)methylamino]-1-(5-phospho-beta-D-ribosyl)imidazole-4-carboxamide + L-glutamine = D-erythro-1-(imidazol-4-yl)glycerol 3-phosphate + 5-amino-1-(5-phospho-beta-D-ribosyl)imidazole-4-carboxamide + L-glutamate + H(+). Its pathway is amino-acid biosynthesis; L-histidine biosynthesis; L-histidine from 5-phospho-alpha-D-ribose 1-diphosphate: step 5/9. Its function is as follows. IGPS catalyzes the conversion of PRFAR and glutamine to IGP, AICAR and glutamate. The HisF subunit catalyzes the cyclization activity that produces IGP and AICAR from PRFAR using the ammonia provided by the HisH subunit. This chain is Imidazole glycerol phosphate synthase subunit HisF, found in Chlorobaculum parvum (strain DSM 263 / NCIMB 8327) (Chlorobium vibrioforme subsp. thiosulfatophilum).